We begin with the raw amino-acid sequence, 190 residues long: Threonylcarbamoyl-AMP synthase (190 aa).

Residues 7–190 form the YrdC-like domain; that stretch reads RDAIAAAIDV…ALTGELFRQG (184 aa).

This sequence belongs to the SUA5 family. TsaC subfamily.

The protein localises to the cytoplasm. The enzyme catalyses L-threonine + hydrogencarbonate + ATP = L-threonylcarbamoyladenylate + diphosphate + H2O. Functionally, required for the formation of a threonylcarbamoyl group on adenosine at position 37 (t(6)A37) in tRNAs that read codons beginning with adenine. Catalyzes the conversion of L-threonine, HCO(3)(-)/CO(2) and ATP to give threonylcarbamoyl-AMP (TC-AMP) as the acyladenylate intermediate, with the release of diphosphate. This chain is Threonylcarbamoyl-AMP synthase, found in Escherichia coli O9:H4 (strain HS).